Reading from the N-terminus, the 176-residue chain is Inner membrane protein p54 (176 aa).

The chain crosses the membrane as a helical span at residues 32 to 52; that stretch reads YTILIAIVVLIIIIIVLIYLF. A disordered region spans residues 82 to 176; it reads VTPQPGIAKP…YTHKDLENSL (95 aa). The segment covering 123–154 has biased composition (low complexity); it reads GMAAGGPAAASAPAHPAELYTTATTQNTASQT. The segment at 142–154 is interaction with host DYNLL1; that stretch reads YTTATTQNTASQT.

Belongs to the asfivirus envelope protein p54 family. Interacts with the host light chain cytoplasmic dynein DYNLL1; this interaction is critical for intracellular microtubule-dependent virus transport toward viral factories.

The protein resides in the virion membrane. It localises to the host cytoplasm. The protein localises to the host cytoskeleton. Its subcellular location is the host endoplasmic reticulum membrane. Functionally, inner envelope protein involved, through its interaction with host dynein, in the intracellular microtubule-dependent transport of viral capsid toward viral factories. Seems to induce caspase-3 activation and apoptosis. Plays a role in virion morphogenesis by recruiting and transforming the host ER membranes into the precursors of the viral envelope. Involved in virus attachment to the host cell. This chain is Inner membrane protein p54, found in African swine fever virus (isolate Tick/Malawi/Lil 20-1/1983) (ASFV).